The primary structure comprises 120 residues: Peptidyl-tRNA hydrolase (120 aa).

It belongs to the PTH2 family.

The protein resides in the cytoplasm. The enzyme catalyses an N-acyl-L-alpha-aminoacyl-tRNA + H2O = an N-acyl-L-amino acid + a tRNA + H(+). In terms of biological role, the natural substrate for this enzyme may be peptidyl-tRNAs which drop off the ribosome during protein synthesis. In Pyrobaculum aerophilum (strain ATCC 51768 / DSM 7523 / JCM 9630 / CIP 104966 / NBRC 100827 / IM2), this protein is Peptidyl-tRNA hydrolase.